We begin with the raw amino-acid sequence, 232 residues long: Membrane steroid-binding protein 1 (232 aa).

The helical transmembrane segment at 25 to 45 (AAFFTAVAAAAALYHVVSGIF) threads the bilayer. Disordered stretches follow at residues 48 to 77 (PPPP…VSEE) and 172 to 232 (TVPV…AKES). The Cytochrome b5 heme-binding domain maps to 71–170 (LGEVSEEELR…GKYVKVGTVK (100 aa)). A steroid-binding region spans residues 73 to 170 (EVSEEELRQY…GKYVKVGTVK (98 aa)). Over residues 179–193 (APSTSPETTETAAAA) the composition is skewed to low complexity. The segment covering 194–219 (EPEKAPATEEKPREVSSEEVKEKEDA) has biased composition (basic and acidic residues).

This sequence belongs to the cytochrome b5 family. MAPR subfamily. As to quaternary structure, interacts with SERL2. In terms of tissue distribution, expressed in leaf sheaths, leaf blades and panicles.

Its subcellular location is the cell membrane. Binds multiple steroid compounds. May act as a coreceptor with SERL2 and enhance its endocytosis. This chain is Membrane steroid-binding protein 1, found in Oryza sativa subsp. japonica (Rice).